The sequence spans 303 residues: MSFTVAVKEEILGQHHLSWHELSAIIKMSGSIGLSTSGLTLSVVTENAKLARHLYESFLHLYEIKSEIRHHQRSNLRKNRVYTVFTDEKVQDLLSDLHLADSFFGLETGIDEAILSDEEAGRAYLCGAFLANGSIRDPESGKYQLEISSVYLDHAQGIASLLQQFLLDAKVLERKKGAVTYLQRAEDIMDFLIVIGAMQARDDFERVKILRETRNDLNRANNAETANIARTVSASMKTINNISKIKDIMGLENLPVDLQEVAQLRIQHPDYSIQQLADSLSTPLTKSGVNHRLRKINKIADEL.

The H-T-H motif DNA-binding region spans 272 to 303 (SIQQLADSLSTPLTKSGVNHRLRKINKIADEL).

The protein belongs to the WhiA family.

Functionally, involved in cell division and chromosome segregation. The chain is Probable cell division protein WhiA from Streptococcus pneumoniae serotype 4 (strain ATCC BAA-334 / TIGR4).